A 178-amino-acid chain; its full sequence is MDLLLLLFSAIWYILPAYIANAVPCILGGGRPVDFGKNFFDGYRLIGNGVTYRGTFFGILFGIITGILQHFIVILYMDPESAFNYGLSGYIILSFLLATGALFGDMLGSFIKRRFKLNQGQSAPLLDQITFIVFALLFAYPFYPLPINTIILLLVISPLIHLSSNIVAYKLHLKKVWW.

4 helical membrane passes run 3 to 23 (LLLL…ANAV), 56 to 76 (FFGI…VILY), 91 to 111 (IILS…GSFI), and 136 to 156 (LLFA…LLVI).

Belongs to the CDP-archaeol synthase family. The cofactor is Mg(2+).

It localises to the cell membrane. It carries out the reaction 2,3-bis-O-(geranylgeranyl)-sn-glycerol 1-phosphate + CTP + H(+) = CDP-2,3-bis-O-(geranylgeranyl)-sn-glycerol + diphosphate. It participates in membrane lipid metabolism; glycerophospholipid metabolism. Its function is as follows. Catalyzes the formation of CDP-2,3-bis-(O-geranylgeranyl)-sn-glycerol (CDP-archaeol) from 2,3-bis-(O-geranylgeranyl)-sn-glycerol 1-phosphate (DGGGP) and CTP. This reaction is the third ether-bond-formation step in the biosynthesis of archaeal membrane lipids. The chain is CDP-archaeol synthase from Methanococcus maripaludis (strain C5 / ATCC BAA-1333).